The chain runs to 458 residues: MALWGGRFTQAADQRFKQFNDSLRFDYRLAEQDIVGSVAWSKALVTVGVLTADEQRQLEEALNVLLEEVRANPQQILQSDAEDIHSWVEGKLIDKVGQLGKKLHTGRSRNDQVATDLKLWCKETVRELLTANRQLQSALVETAQANQDAVMPGYTHLQRAQPVTFAHWCLAYVEMLARDESRLQDTLKRLDVSPLGCGALAGTAYEIDREQLAGWLGFTSATRNSLDSVSDRDHVLELLSDAAIGMVHLSRFAEDLIFFNSGEAGFVELSDRVTSGSSLMPQKKNPDALELIRGKCGRVQGALTGMMMTLKGLPLAYNKDMQEDKEGLFDALDTWLDCLHMAALVLDGIQVKRPRCQDAAQQGYANATELADYLVAKGVPFREAHHIVGEAVVEAIRQGKPLEALPLADLQKFSRVIGDDVYPILSLQSCLDKRAAKGGVSPQQVAQAIDDARARLAL.

It belongs to the lyase 1 family. Argininosuccinate lyase subfamily.

It is found in the cytoplasm. The enzyme catalyses 2-(N(omega)-L-arginino)succinate = fumarate + L-arginine. It participates in amino-acid biosynthesis; L-arginine biosynthesis; L-arginine from L-ornithine and carbamoyl phosphate: step 3/3. This chain is Argininosuccinate lyase, found in Salmonella paratyphi B (strain ATCC BAA-1250 / SPB7).